Reading from the N-terminus, the 126-residue chain is MNITLLKSKIHRANVTEARLDYVGSISIDEKLLQASGILEYEKVQVVNVNNGARFETYTIATQEEGVVCLNGAAARLAEVGDKVIIMSYADFNEEEAKTFKPKVVFVDENNTATKITNYEKHGAIF.

Catalysis depends on Ser25, which acts as the Schiff-base intermediate with substrate; via pyruvic acid. A Pyruvic acid (Ser) modification is found at Ser25. Thr57 contacts substrate. Tyr58 acts as the Proton donor in catalysis. 72–74 serves as a coordination point for substrate; it reads GAA.

The protein belongs to the PanD family. In terms of assembly, heterooctamer of four alpha and four beta subunits. It depends on pyruvate as a cofactor. Is synthesized initially as an inactive proenzyme, which is activated by self-cleavage at a specific serine bond to produce a beta-subunit with a hydroxyl group at its C-terminus and an alpha-subunit with a pyruvoyl group at its N-terminus.

It is found in the cytoplasm. It carries out the reaction L-aspartate + H(+) = beta-alanine + CO2. Its pathway is cofactor biosynthesis; (R)-pantothenate biosynthesis; beta-alanine from L-aspartate: step 1/1. Catalyzes the pyruvoyl-dependent decarboxylation of aspartate to produce beta-alanine. The polypeptide is Aspartate 1-decarboxylase (Campylobacter jejuni subsp. jejuni serotype O:23/36 (strain 81-176)).